Reading from the N-terminus, the 334-residue chain is E3 ubiquitin-protein ligase ATL4 (334 aa).

A disordered region spans residues 1 to 20 (MESLINPSHGGGNYDSHSSS). A helical membrane pass occupies residues 28 to 48 (VLVIILILLMTLLISVSICFL). The segment at 117-159 (CAVCLSKFEPEDQLRLLPLCCHAFHADCIDIWLVSNQTCPLCR) adopts an RING-type; atypical zinc-finger fold.

The protein belongs to the RING-type zinc finger family. ATL subfamily.

The protein resides in the membrane. It carries out the reaction S-ubiquitinyl-[E2 ubiquitin-conjugating enzyme]-L-cysteine + [acceptor protein]-L-lysine = [E2 ubiquitin-conjugating enzyme]-L-cysteine + N(6)-ubiquitinyl-[acceptor protein]-L-lysine.. The protein operates within protein modification; protein ubiquitination. Functionally, E3 ubiquitin-protein ligase able to catalyze polyubiquitination with ubiquitin-conjugating enzyme E2 UBC8 in vitro. This Arabidopsis thaliana (Mouse-ear cress) protein is E3 ubiquitin-protein ligase ATL4.